Reading from the N-terminus, the 408-residue chain is Peptidase T (408 aa).

Residue His78 participates in Zn(2+) binding. The active site involves Asp80. Zn(2+) is bound at residue Asp140. The active-site Proton acceptor is the Glu173. Glu174, Asp196, and His379 together coordinate Zn(2+).

This sequence belongs to the peptidase M20B family. The cofactor is Zn(2+).

It is found in the cytoplasm. The catalysed reaction is Release of the N-terminal residue from a tripeptide.. Functionally, cleaves the N-terminal amino acid of tripeptides. The protein is Peptidase T of Citrobacter koseri (strain ATCC BAA-895 / CDC 4225-83 / SGSC4696).